A 394-amino-acid chain; its full sequence is L-lactate 2-monooxygenase (394 aa).

In terms of domain architecture, FMN hydroxy acid dehydrogenase spans Val19 to Arg394. Tyr45 is a binding site for a 2-oxocarboxylate. Residues Pro98 to Gly100, Ser129, and Gln151 contribute to the FMN site. Residue Tyr153 coordinates a 2-oxocarboxylate. Thr179 contacts FMN. Arg188 contacts a 2-oxocarboxylate. Lys267 provides a ligand contact to FMN. His291 acts as the Proton acceptor in catalysis. Arg294 is an a 2-oxocarboxylate binding site. FMN contacts are provided by residues Asp321–Arg325 and Arg345.

It belongs to the FMN-dependent alpha-hydroxy acid dehydrogenase family. As to quaternary structure, homotetramer. FMN is required as a cofactor.

It catalyses the reaction (S)-lactate + O2 = acetate + CO2 + H2O. Functionally, catalyzes the oxidative decarboxylation of (S)-lactate (L-lactate) to acetate and carbon dioxide. Its physiological role remains unknown. The protein is L-lactate 2-monooxygenase of Mycolicibacterium smegmatis (Mycobacterium smegmatis).